The chain runs to 223 residues: MTDQPSSIALLRLMAWLSPAFPVGGFAYSHGLECAVHDGLVADATSLANWLETLVKMGSGWNDAVLFCESWRRARNAGDLDEVAALAEALAGSRERHAETMLQGAAFLKAAAAWPNPVLARLPAECAYCVTVGAIAGGNGIALQDALSAFLQAFFSNLVQAAIRLGVVGQSEATTLLAGFEPLALSTADRASRSTLDDLGGCAFVSDVVAMKHETQYSRLFRS.

This sequence belongs to the UreF family. UreD, UreF and UreG form a complex that acts as a GTP-hydrolysis-dependent molecular chaperone, activating the urease apoprotein by helping to assemble the nickel containing metallocenter of UreC. The UreE protein probably delivers the nickel.

The protein localises to the cytoplasm. In terms of biological role, required for maturation of urease via the functional incorporation of the urease nickel metallocenter. The chain is Urease accessory protein UreF from Mesorhizobium japonicum (strain LMG 29417 / CECT 9101 / MAFF 303099) (Mesorhizobium loti (strain MAFF 303099)).